A 118-amino-acid chain; its full sequence is Basic phospholipase A2 PA-10A (118 aa).

7 disulfides stabilise this stretch: Cys11-Cys71, Cys27-Cys117, Cys29-Cys45, Cys44-Cys98, Cys51-Cys91, Cys60-Cys84, and Cys78-Cys89. Tyr28, Gly30, and Gly32 together coordinate Ca(2+). His48 is an active-site residue. Asp49 provides a ligand contact to Ca(2+). Residue Asp92 is part of the active site.

It belongs to the phospholipase A2 family. Group I subfamily. D49 sub-subfamily. Ca(2+) serves as cofactor. In terms of tissue distribution, expressed by the venom gland.

It localises to the secreted. The catalysed reaction is a 1,2-diacyl-sn-glycero-3-phosphocholine + H2O = a 1-acyl-sn-glycero-3-phosphocholine + a fatty acid + H(+). Functionally, PLA2 catalyzes the calcium-dependent hydrolysis of the 2-acyl groups in 3-sn-phosphoglycerides. This Pseudechis australis (Mulga snake) protein is Basic phospholipase A2 PA-10A.